We begin with the raw amino-acid sequence, 316 residues long: Probable metal transport system membrane protein TC_0342 (316 aa).

The next 10 helical transmembrane spans lie at 1-21 (MFAS…IVFF), 39-59 (IQVI…TFLV), 64-84 (AMYA…ACLF), 94-114 (QNLT…IHFI), 124-144 (ASTA…LVFL), 171-191 (FLVL…FICV), 196-216 (VFAF…MFLL), 226-246 (AVGV…AKLI), 252-272 (EMMG…PALS), and 286-306 (SGLA…TVFV).

This sequence belongs to the ABC-3 integral membrane protein family.

It is found in the cell inner membrane. Functionally, part of an ATP-driven transport system TC_0338/TC_0339/TC_0341/TC_0342 for a metal. This chain is Probable metal transport system membrane protein TC_0342, found in Chlamydia muridarum (strain MoPn / Nigg).